We begin with the raw amino-acid sequence, 503 residues long: Glucosaminyl-phosphatidylinositol-acyltransferase PIGW (503 aa).

Over 1–21 the chain is Lumenal; the sequence is MSQKQLKEAFVRNLSGTSVLE. A glycan (N-linked (GlcNAc...) asparagine) is linked at N13. The helical transmembrane segment at 22–42 threads the bilayer; sequence VTQGLCFPAFCILCRGLWIIF. At 43 to 48 the chain is on the cytoplasmic side; it reads SQHVCS. The chain crosses the membrane as a helical span at residues 49–71; the sequence is FSNTWSTRFLMDFVVLIVPLVIT. Residues 72 to 74 lie on the Lumenal side of the membrane; it reads LTV. The helical transmembrane segment at 75–97 threads the bilayer; that stretch reads LSSFILLENLTVIVWGAWLLYQI. Over 98 to 131 the chain is Cytoplasmic; that stretch reads YHRRTCYAKVPVQKVFANFLKISLESEYNPAITC. A helical transmembrane segment spans residues 132-152; sequence YRVINSVFTAIAILAVDFPLF. The Lumenal portion of the chain corresponds to 153–160; sequence PRRFAKTE. The chain crosses the membrane as a helical span at residues 161-181; that stretch reads LYGTGAMDFGVGGFIFGAAMV. Residues 182 to 201 lie on the Cytoplasmic side of the membrane; it reads CPEVRRKSIEESRFNYLRKS. A helical transmembrane segment spans residues 202 to 222; sequence LYSVWPLVFLGMGRLVIIKSI. At 223–236 the chain is on the lumenal side; it reads GYQEHSTEYGIHWN. The helical transmembrane segment at 237–257 threads the bilayer; sequence FFFTIIVVRLVTSLLLIIFPL. The Cytoplasmic segment spans residues 258–259; it reads NK. The helical transmembrane segment at 260-280 threads the bilayer; the sequence is SWIVAVSITVVYQLALDYTPL. Residues 281–304 are Lumenal-facing; that stretch reads KRILLYGTDGSGTRVGFLNANREG. A helical membrane pass occupies residues 305–325; the sequence is IISTLGYVTIHMAGVQTGLYV. At 326–339 the chain is on the cytoplasmic side; sequence LKGRAQVRDWIKAT. Residues 340-360 traverse the membrane as a helical segment; sequence CWVFSVAVGFFISLHIVQVNI. The Lumenal portion of the chain corresponds to 361-380; the sequence is EAVSRRMANLAFCLWVVASS. The helical transmembrane segment at 381-401 threads the bilayer; that stretch reads LMLLSCLLLSGIILSFAQFLI. Topologically, residues 402 to 447 are cytoplasmic; it reads KGSLVPCSWKLIQSPTTHKNHSESLILEAEKNQPSLCLITALNRNQ. S415 carries the post-translational modification Phosphoserine. A helical transmembrane segment spans residues 448-468; that stretch reads LFFFLLSNITTGLINLTMDTL. Over 469 to 472 the chain is Lumenal; the sequence is HTGA. A helical membrane pass occupies residues 473 to 493; sequence LWTLVVLSIYMFTNCLVIYVL. Over 494-503 the chain is Cytoplasmic; sequence DLQGKTIKFW.

The protein belongs to the PIGW family.

It is found in the endoplasmic reticulum membrane. It functions in the pathway glycolipid biosynthesis; glycosylphosphatidylinositol-anchor biosynthesis. Its function is as follows. Acyltransferase that catalyzes the acyl transfer from an acyl-CoA at the 2-OH position of the inositol ring of glucosaminyl phosphatidylinositol (GlcN-PI) to generate GlcN-(acyl)PI and participates in the fourth step of GPI-anchor biosynthesi. Required for the transport of GPI-anchored proteins to the plasma membrane. Acetylation during GPI-anchor biosynthesis is not essential for the subsequent mannosylation and is usually removed soon after the attachment of GPIs to proteins. This Mus musculus (Mouse) protein is Glucosaminyl-phosphatidylinositol-acyltransferase PIGW.